The following is a 151-amino-acid chain: UPF0178 protein Sde_3033 (151 aa).

It belongs to the UPF0178 family.

This Saccharophagus degradans (strain 2-40 / ATCC 43961 / DSM 17024) protein is UPF0178 protein Sde_3033.